The chain runs to 194 residues: uncharacterized protein (194 aa).

A compositionally biased stretch (polar residues) spans 77–92 (QTQPQHQTLSQHLPQT). The disordered stretch occupies residues 77–96 (QTQPQHQTLSQHLPQTHHTD). A helical membrane pass occupies residues 169–189 (FWEILLLIILIAVLVYGIYWL).

Its subcellular location is the host membrane. It is found in the virion. This is an uncharacterized protein from Acanthamoeba polyphaga (Amoeba).